The primary structure comprises 235 residues: MVFNVNILTIFPEMFPGTLGYSVIGKALNKGIWNLNVIDIRSFATDKHKTVDDKPYGGGPGMIMKADVIGSAIDNVLSTNKETKLIYMSPSGVKLNQDISGQLAHFSNITILCGRFEGIDRRVLDFYDFYEISIGDYILSGGEVASMVLIETCVRLIPGVVSNVDSIRDESFTASYGLEYSQYTRPASWRGLEVPSVLVSGNHKKINLWKTQQSYRITKQRRPELTNTADGDIYE.

S-adenosyl-L-methionine-binding positions include G114 and 134-139; that span reads IGDYIL.

It belongs to the RNA methyltransferase TrmD family. Homodimer.

The protein localises to the cytoplasm. It catalyses the reaction guanosine(37) in tRNA + S-adenosyl-L-methionine = N(1)-methylguanosine(37) in tRNA + S-adenosyl-L-homocysteine + H(+). In terms of biological role, specifically methylates guanosine-37 in various tRNAs. The chain is tRNA (guanine-N(1)-)-methyltransferase from Ehrlichia ruminantium (strain Gardel).